We begin with the raw amino-acid sequence, 443 residues long: Probable nitrate/nitrite antiporter NarK1 (443 aa).

The next 12 membrane-spanning stretches (helical) occupy residues 23-43 (TLAFTLMFAAWLMFGVLGVPI), 56-76 (WISALAILNGSLWRLLAGILA), 79-99 (YGGRLVFTLMLFFTAIPAYLV), 108-128 (LLLYAFLVGFAGNSFSVGIAW), 142-164 (LGVFGAGNVGASVTKFIGPALIA), 182-202 (FIPFLYAVLLVLMGFVLWFGT), 230-250 (FSLYYVVVFGAYVALSAWLPK), 255-275 (VFGLPLHEAALLTALFIFPAS), 298-318 (FGIILLASGVLMMPEGHIVLY), 329-349 (FTMGVELFTLLVFLIGVGMGI), 368-388 (AVGGLVGMLGALGGFFLPPLF), and 401-421 (TFFVLFLLAAISFLWMHLTVL).

The protein belongs to the major facilitator superfamily. Nitrate/nitrite porter (TC 2.A.1.8) family.

It localises to the cell membrane. It carries out the reaction nitrate(in) + nitrite(out) = nitrate(out) + nitrite(in). In terms of biological role, probable nitrate/nitrite antiporter that may be involved in nitrate import and nitrite export during anaerobic growth. This Thermus thermophilus protein is Probable nitrate/nitrite antiporter NarK1.